Consider the following 378-residue polypeptide: Dihydroorotate dehydrogenase (quinone) (378 aa).

FMN-binding positions include 79 to 83 and T103; that span reads PGYDK. K83 provides a ligand contact to substrate. 128 to 132 is a binding site for substrate; the sequence is NRMGF. FMN is bound by residues N160 and N193. N193 is a binding site for substrate. The active-site Nucleophile is the S196. N198 is a binding site for substrate. FMN contacts are provided by K231 and T259. Residue 260-261 coordinates substrate; sequence NT. FMN is bound by residues G289, G318, and 339–340; that span reads YT.

It belongs to the dihydroorotate dehydrogenase family. Type 2 subfamily. As to quaternary structure, monomer. The cofactor is FMN.

The protein resides in the cell membrane. The catalysed reaction is (S)-dihydroorotate + a quinone = orotate + a quinol. It functions in the pathway pyrimidine metabolism; UMP biosynthesis via de novo pathway; orotate from (S)-dihydroorotate (quinone route): step 1/1. In terms of biological role, catalyzes the conversion of dihydroorotate to orotate with quinone as electron acceptor. This Trichodesmium erythraeum (strain IMS101) protein is Dihydroorotate dehydrogenase (quinone).